We begin with the raw amino-acid sequence, 332 residues long: Glycerol-3-phosphate dehydrogenase [NAD(P)+] (332 aa).

Residues Ser-11, Trp-12, Arg-32, Arg-33, and Lys-106 each coordinate NADPH. Positions 106 and 136 each coordinate sn-glycerol 3-phosphate. Ala-140 contacts NADPH. Sn-glycerol 3-phosphate-binding residues include Lys-191, Asp-244, Ser-254, Arg-255, and Asn-256. The Proton acceptor role is filled by Lys-191. Arg-255 contacts NADPH. NADPH contacts are provided by Val-280 and Glu-282.

Belongs to the NAD-dependent glycerol-3-phosphate dehydrogenase family.

It localises to the cytoplasm. It catalyses the reaction sn-glycerol 3-phosphate + NAD(+) = dihydroxyacetone phosphate + NADH + H(+). The enzyme catalyses sn-glycerol 3-phosphate + NADP(+) = dihydroxyacetone phosphate + NADPH + H(+). Its pathway is membrane lipid metabolism; glycerophospholipid metabolism. Functionally, catalyzes the reduction of the glycolytic intermediate dihydroxyacetone phosphate (DHAP) to sn-glycerol 3-phosphate (G3P), the key precursor for phospholipid synthesis. The polypeptide is Glycerol-3-phosphate dehydrogenase [NAD(P)+] (Corynebacterium aurimucosum (strain ATCC 700975 / DSM 44827 / CIP 107346 / CN-1) (Corynebacterium nigricans)).